The following is a 190-amino-acid chain: Threonylcarbamoyl-AMP synthase (190 aa).

The region spanning 7 to 190 (LSSLIKCIRK…IVNGKLIRYV (184 aa)) is the YrdC-like domain.

This sequence belongs to the SUA5 family. TsaC subfamily.

The protein localises to the cytoplasm. The catalysed reaction is L-threonine + hydrogencarbonate + ATP = L-threonylcarbamoyladenylate + diphosphate + H2O. In terms of biological role, required for the formation of a threonylcarbamoyl group on adenosine at position 37 (t(6)A37) in tRNAs that read codons beginning with adenine. Catalyzes the conversion of L-threonine, HCO(3)(-)/CO(2) and ATP to give threonylcarbamoyl-AMP (TC-AMP) as the acyladenylate intermediate, with the release of diphosphate. The protein is Threonylcarbamoyl-AMP synthase of Buchnera aphidicola subsp. Schizaphis graminum (strain Sg).